Consider the following 308-residue polypeptide: Porphobilinogen deaminase (308 aa).

Cys-241 is subject to S-(dipyrrolylmethanemethyl)cysteine.

Belongs to the HMBS family. As to quaternary structure, monomer. It depends on dipyrromethane as a cofactor.

It catalyses the reaction 4 porphobilinogen + H2O = hydroxymethylbilane + 4 NH4(+). Its pathway is porphyrin-containing compound metabolism; protoporphyrin-IX biosynthesis; coproporphyrinogen-III from 5-aminolevulinate: step 2/4. Tetrapolymerization of the monopyrrole PBG into the hydroxymethylbilane pre-uroporphyrinogen in several discrete steps. The chain is Porphobilinogen deaminase from Staphylococcus saprophyticus subsp. saprophyticus (strain ATCC 15305 / DSM 20229 / NCIMB 8711 / NCTC 7292 / S-41).